Consider the following 597-residue polypeptide: Arginine--tRNA ligase (597 aa).

The short motif at 125–135 (PNTNKPLHLGH) is the 'HIGH' region element.

The protein belongs to the class-I aminoacyl-tRNA synthetase family. As to quaternary structure, monomer.

Its subcellular location is the cytoplasm. It catalyses the reaction tRNA(Arg) + L-arginine + ATP = L-arginyl-tRNA(Arg) + AMP + diphosphate. This Bacteroides fragilis (strain YCH46) protein is Arginine--tRNA ligase.